The following is a 326-amino-acid chain: Peroxidase 6 (326 aa).

An N-terminal signal peptide occupies residues 1–20; that stretch reads MKSFGLCLFILVSSPCLLQA. Asn21 is a glycosylation site (N-linked (GlcNAc...) asparagine). Intrachain disulfides connect Cys31/Cys112, Cys64/Cys69, Cys118/Cys318, and Cys197/Cys228. Residue His62 is the Proton acceptor of the active site. Residues Asp63, Val66, Gly68, Asp70, and Ser72 each coordinate Ca(2+). N-linked (GlcNAc...) asparagine glycosylation occurs at Asn163. Position 190 (His190) interacts with heme b. Ca(2+) is bound at residue Thr191. N-linked (GlcNAc...) asparagine glycans are attached at residues Asn206 and Asn230. Ca(2+) contacts are provided by Asp242, Thr245, and Asp250. N-linked (GlcNAc...) asparagine glycosylation occurs at Asn274.

This sequence belongs to the peroxidase family. Classical plant (class III) peroxidase subfamily. Heme b serves as cofactor. Requires Ca(2+) as cofactor.

The protein localises to the secreted. The enzyme catalyses 2 a phenolic donor + H2O2 = 2 a phenolic radical donor + 2 H2O. Functionally, removal of H(2)O(2), oxidation of toxic reductants, biosynthesis and degradation of lignin, suberization, auxin catabolism, response to environmental stresses such as wounding, pathogen attack and oxidative stress. These functions might be dependent on each isozyme/isoform in each plant tissue. The protein is Peroxidase 6 (PER6) of Arabidopsis thaliana (Mouse-ear cress).